The sequence spans 152 residues: UPF0266 membrane protein plu2700 (152 aa).

The next 3 helical transmembrane spans lie at 6–26, 45–65, and 67–87; these read IALT…EFVV, IDAL…ITVY, and SRLT…IAYI.

It belongs to the UPF0266 family.

It localises to the cell inner membrane. This is UPF0266 membrane protein plu2700 from Photorhabdus laumondii subsp. laumondii (strain DSM 15139 / CIP 105565 / TT01) (Photorhabdus luminescens subsp. laumondii).